The primary structure comprises 438 residues: uncharacterized protein (438 aa).

Positions 23–193 (IHAKPPVVVV…VNATIRLTAA (171 aa)) constitute an FAD-binding PCMH-type domain. Residues 55-59 (VRGSG), 60-61 (HS), Gln-65, Asp-117, Thr-122, 128-132 (SVGGF), Ile-183, Tyr-393, and 430-433 (APGY) contribute to the FAD site. Pros-8alpha-FAD histidine is present on His-60.

This sequence belongs to the oxygen-dependent FAD-linked oxidoreductase family. It depends on FAD as a cofactor.

Its function is as follows. The FAS-operon encodes genes involved in cytokinin production and in host plant fasciation (leafy gall). This is an uncharacterized protein from Rhodococcoides fascians (Rhodococcus fascians).